Here is a 257-residue protein sequence, read N- to C-terminus: 3-methyl-2-oxobutanoate hydroxymethyltransferase (257 aa).

Mg(2+) is bound by residues Asp42 and Asp86. 3-methyl-2-oxobutanoate-binding positions include 42–43 (DS), Asp86, and Lys116. Glu118 provides a ligand contact to Mg(2+). Glu185 serves as the catalytic Proton acceptor.

It belongs to the PanB family. As to quaternary structure, homodecamer; pentamer of dimers. It depends on Mg(2+) as a cofactor.

Its subcellular location is the cytoplasm. It carries out the reaction 3-methyl-2-oxobutanoate + (6R)-5,10-methylene-5,6,7,8-tetrahydrofolate + H2O = 2-dehydropantoate + (6S)-5,6,7,8-tetrahydrofolate. Its pathway is cofactor biosynthesis; (R)-pantothenate biosynthesis; (R)-pantoate from 3-methyl-2-oxobutanoate: step 1/2. Catalyzes the reversible reaction in which hydroxymethyl group from 5,10-methylenetetrahydrofolate is transferred onto alpha-ketoisovalerate to form ketopantoate. This chain is 3-methyl-2-oxobutanoate hydroxymethyltransferase, found in Prochlorococcus marinus (strain MIT 9215).